A 342-amino-acid polypeptide reads, in one-letter code: C-X-C chemokine receptor type 6 (342 aa).

Residues 1-32 (MAEHDYHEDYGLNSFNDSSQEEHQDFLQFRKV) are Extracellular-facing. N-linked (GlcNAc...) asparagine glycosylation is present at N16. A helical transmembrane segment spans residues 33–59 (FLPCMYLVVFVCGLVGNSLVLVISIFY). The Cytoplasmic portion of the chain corresponds to 60–68 (HKLQSLTDV). Residues 69-89 (FLVNLPLADLVFVCTLPFWAY) traverse the membrane as a helical segment. At 90–103 (AGIHEWIFGQVMCK) the chain is on the extracellular side. C102 and C180 are oxidised to a cystine. The chain crosses the membrane as a helical span at residues 104–125 (TLLGVYTINFYTSMLILTCITV). Residues 126 to 143 (DRFIVVVKATKAYNQQAK) are Cytoplasmic-facing. Residues 144 to 164 (RMTWGKVICLLIWVISLLVSL) traverse the membrane as a helical segment. At 165 to 187 (PQIIYGNVFNLDKLICGYHDKEI) the chain is on the extracellular side. Residues 188 to 215 (STVVLATQMTLGFFLPLLAMIVCYSVII) form a helical membrane-spanning segment. Over 216-231 (KTLLHAGGFQKHRSLK) the chain is Cytoplasmic. The helical transmembrane segment at 232–259 (IIFLVMAVFLLTQTPFNLVKLIRSTHWE) threads the bilayer. Topologically, residues 260 to 275 (YYAMTSFHYTIIVTEA) are extracellular. A helical transmembrane segment spans residues 276–293 (IAYLRACLNPVLYAFVSL). Residues 294-342 (KFRKNFWKLVKDIGCLPYLGVSHQWKSSEDNSKTFSASHNVEATSMFQL) lie on the Cytoplasmic side of the membrane.

This sequence belongs to the G-protein coupled receptor 1 family.

The protein resides in the cell membrane. In terms of biological role, receptor for the C-X-C chemokine CXCL16. Used as a coreceptor by SIVs and by strains of HIV-2 and m-tropic HIV-1. In Macaca nemestrina (Pig-tailed macaque), this protein is C-X-C chemokine receptor type 6 (CXCR6).